Consider the following 557-residue polypeptide: Carotenoid-cleaving dioxygenase, mitochondrial (557 aa).

Residues histidine 203, histidine 263, histidine 334, and histidine 551 each contribute to the Fe cation site.

It belongs to the carotenoid oxygenase family. It depends on Fe(2+) as a cofactor.

The protein resides in the mitochondrion. It carries out the reaction all-trans-beta-carotene + O2 = beta-ionone + all-trans-10'-apo-beta-carotenal. It catalyses the reaction 5-cis-lycopene + O2 = 5-cis-10'-apo-lycopenal + (3E,5E)-6,10-dimethylundeca-3,5,9-trien-2-one. The enzyme catalyses 13-cis-lycopene + O2 = 13-cis-10'-apo-lycopenal + (3E,5E)-6,10-dimethylundeca-3,5,9-trien-2-one. The catalysed reaction is lutein + O2 = (3R,6R)-hydroxy-alpha-ionone + (3R)-3-hydroxy-10'-apo-beta-carotenal. It carries out the reaction lutein + O2 = (3R,6R)-3-hydroxy-10'-apo-alpha-carotenal + (3R)-hydroxy-beta-ionone. It catalyses the reaction all-trans-zeaxanthin + 2 O2 = 4,9-dimethyldodeca-2,4,6,8,10-pentaenedial + 2 (3R)-hydroxy-beta-ionone. The enzyme catalyses all-trans-zeaxanthin + O2 = (3R)-3-hydroxy-10'-apo-beta-carotenal + (3R)-hydroxy-beta-ionone. The catalysed reaction is beta-cryptoxanthin + O2 = all-trans-10'-apo-beta-carotenal + (3R)-hydroxy-beta-ionone. It carries out the reaction all-trans-10'-apo-beta-carotenal + O2 = beta-ionone + 4,9-dimethyldodeca-2,4,6,8,10-pentaenedial. It catalyses the reaction (3R)-3-hydroxy-10'-apo-beta-carotenal + O2 = 4,9-dimethyldodeca-2,4,6,8,10-pentaenedial + (3R)-hydroxy-beta-ionone. The enzyme catalyses (3R,6R)-3-hydroxy-10'-apo-alpha-carotenal + O2 = (3R,6R)-hydroxy-alpha-ionone + 4,9-dimethyldodeca-2,4,6,8,10-pentaenedial. In terms of biological role, broad specificity mitochondrial dioxygenase that mediates the asymmetric oxidative cleavage of carotenoids. Cleaves carotenes (pure hydrocarbon carotenoids) such as all-trans-beta-carotene and lycopene as well as xanthophylls (oxygenated carotenoids) such as zeaxanthin, lutein and beta-cryptoxanthin at both the 9,10 and the 9',10' carbon-carbon double bond. Through its function in carotenoids metabolism regulates oxidative stress and the production of important signaling molecules. The chain is Carotenoid-cleaving dioxygenase, mitochondrial from Pongo abelii (Sumatran orangutan).